The primary structure comprises 346 residues: Immunoglobulin heavy constant alpha (346 aa).

3 Ig-like domains span residues 6 to 96, 118 to 212, and 221 to 323; these read PSIF…KSVD, PRLS…VSIT, and PQVH…KSID. C26 and C83 are joined by a disulfide. The N-linked (GlcNAc...) (complex) asparagine glycan is linked to N134. 2 cysteine pairs are disulfide-bonded: C139/C196 and C243/C306. An N-linked (GlcNAc...) (complex) asparagine glycan is attached at N333.

In terms of assembly, immunoglobulins are composed of two identical heavy chains and two identical light chains; disulfide-linked. Monomeric or polymeric. Part of the secretory IgA (sIgA) complex that consists of two, four or five IgA monomers, and two additional non-Ig polypeptides, namely the JCHAIN and the secretory component (the proteolytic product of PIGR). Post-translationally, N-glycosylated. N-glycans attached to Asn-134 varies from differentially fucosylated complex and hybrid to sialylated with N-glycoyl neuraminic acid types: GlcNAc2Man3GlcNAc2(Fuc); GlcNAc1Man4GlcNAc2(Fuc); GlcNAc1Man4GlcNAc2; Gal1GlcNAc2Man3GlcNAc2(Fuc); GlcNAc2Man3GlcNAc2; Gal1GlcNAc2Man3GlcNAc2; GlcNAc1Man3GlcNAc2; GlcNAc1Man2GlcNAc2 and NeuGc1Gal1GlcNAc2Man3GlcNAc2(Fuc). N-glycans attached to Asn-333 are mainly fucosylated complex types: GlcNAc2Man3GlcNAc2; GlcNAc1Man3GlcNAc2; GlcNAc1Man3GlcNAc2(Fuc); GlcNAc2Man3GlcNAc2(Fuc); Gal1GlcNAc2Man3GlcNAc2(Fuc); NeuGc1Gal1GlcNAc1Man3GlcNAc2(Fuc); NeuGc1Gal1GlcNAc2Man3GlcNAc2(Fuc) and NeuAc1Gal1GlcNAc2Man3GlcNAc2(Fuc).

It localises to the secreted. The protein resides in the cell membrane. Its function is as follows. Constant region of immunoglobulin heavy chains. Immunoglobulins, also known as antibodies, are membrane-bound or secreted glycoproteins produced by B lymphocytes. In the recognition phase of humoral immunity, the membrane-bound immunoglobulins serve as receptors which, upon binding of a specific antigen, trigger the clonal expansion and differentiation of B lymphocytes into immunoglobulins-secreting plasma cells. Secreted immunoglobulins mediate the effector phase of humoral immunity, which results in the elimination of bound antigens. The antigen binding site is formed by the variable domain of one heavy chain, together with that of its associated light chain. Thus, each immunoglobulin has two antigen binding sites with remarkable affinity for a particular antigen. The variable domains are assembled by a process called V-(D)-J rearrangement and can then be subjected to somatic hypermutations which, after exposure to antigen and selection, allow affinity maturation for a particular antigen. Ig alpha is the major immunoglobulin class in body secretions. This Equus asinus (Donkey) protein is Immunoglobulin heavy constant alpha (IGHA).